The chain runs to 737 residues: Catalase-peroxidase (737 aa).

Positions Trp-102–Tyr-225 form a cross-link, tryptophyl-tyrosyl-methioninium (Trp-Tyr) (with M-251). The Proton acceptor role is filled by His-103. The segment at residues Tyr-225–Met-251 is a cross-link (tryptophyl-tyrosyl-methioninium (Tyr-Met) (with W-102)). Position 266 (His-266) interacts with heme b.

This sequence belongs to the peroxidase family. Peroxidase/catalase subfamily. Homodimer or homotetramer. The cofactor is heme b. In terms of processing, formation of the three residue Trp-Tyr-Met cross-link is important for the catalase, but not the peroxidase activity of the enzyme.

It catalyses the reaction H2O2 + AH2 = A + 2 H2O. It carries out the reaction 2 H2O2 = O2 + 2 H2O. Bifunctional enzyme with both catalase and broad-spectrum peroxidase activity. This is Catalase-peroxidase from Caulobacter sp. (strain K31).